Reading from the N-terminus, the 333-residue chain is Small GTPase-like protein LIP2 (333 aa).

The interval 11–288 (NKEHMVAPLC…YKYNTLPQHN (278 aa)) is small GTPase-like. GTP contacts are provided by residues 29–36 (GDSGVGKS), 90–94 (DVSGH), and 160–163 (NKAD). Residues 242–253 (SPSSAWSLSHAP) show a composition bias toward polar residues. A disordered region spans residues 242 to 265 (SPSSAWSLSHAPSQRLDEGTSDED).

This sequence belongs to the small GTPase superfamily.

The polypeptide is Small GTPase-like protein LIP2 (Arabidopsis thaliana (Mouse-ear cress)).